We begin with the raw amino-acid sequence, 95 residues long: Large ribosomal subunit protein uL23 (95 aa).

Belongs to the universal ribosomal protein uL23 family. Part of the 50S ribosomal subunit. Contacts protein L29, and trigger factor when it is bound to the ribosome.

Functionally, one of the early assembly proteins it binds 23S rRNA. One of the proteins that surrounds the polypeptide exit tunnel on the outside of the ribosome. Forms the main docking site for trigger factor binding to the ribosome. The polypeptide is Large ribosomal subunit protein uL23 (Desulforudis audaxviator (strain MP104C)).